The sequence spans 2472 residues: Spectrin alpha chain, non-erythrocytic 1 (2472 aa).

Methionine 1 is modified (N-acetylmethionine). Spectrin repeat units lie at residues 45 to 146 (RFQF…IKLL), 150 to 251 (KLVQ…QGKL), 256 to 358 (EVQR…ARLN), 361 to 465 (YRLQ…QYEQ), 468 to 570 (DLQL…AQLA), 574 to 676 (HLQQ…KLRE), 679 to 781 (QQQQ…QKLA), 785 to 888 (RLQQ…DLED), and 891 to 969 (QAQQ…ETGK). Serine 587 is modified (phosphoserine). Lysine 637 is subject to N6-acetyllysine. Lysine 803 carries the post-translational modification N6-acetyllysine. Phosphoserine is present on residues serine 924, serine 982, serine 999, serine 1029, serine 1031, and serine 1041. The 60-residue stretch at 967 to 1026 (TGKELVLALYDYQEKSPREVTMKKGDILTLLNSTNKDWWKVEVNDRQGFVPAAYVKKLDP) folds into the SH3 domain. One copy of the Spectrin 10 repeat lies at 1096-1166 (LFREANELQQ…LESEGLMAEE (71 aa)). Position 1176 is a phosphotyrosine (tyrosine 1176). 7 positions are modified to phosphoserine: serine 1190, serine 1207, serine 1217, serine 1291, serine 1306, serine 1323, and serine 1338. Residues 1233–1336 (HEVQRFHRDA…RADQRKAKLG (104 aa)) form a Spectrin 11 repeat. Spectrin repeat units follow at residues 1339-1442 (HDLQ…MMLD) and 1446-1549 (ELQL…KLGE). Lysine 1519 is modified (N6-acetyllysine). Residues serine 1550, serine 1557, serine 1578, serine 1615, and serine 1647 each carry the phosphoserine modification. Spectrin repeat units follow at residues 1552-1656 (TLQQ…KLKE), 1659-1762 (KQQN…KLNE), 1764-1868 (HRLH…RLEE), 1871-1974 (EYQQ…KLDE), 1978-2081 (FLQF…KLLE), 2092-2194 (LFLT…LELQ), and 2206-2310 (LRQE…NLEQ). Threonine 2020 carries the phosphothreonine modification. At lysine 2052 the chain carries N6-acetyllysine. 3 EF-hand domains span residues 2323-2358 (EALK…LGYD), 2366-2401 (EPDP…RETE), and 2404-2439 (KSSE…EQAD). Aspartate 2336, aspartate 2338, serine 2340, arginine 2342, glutamate 2347, aspartate 2379, asparagine 2381, aspartate 2383, histidine 2385, and glutamate 2390 together coordinate Ca(2+). An N6-acetyllysine modification is found at lysine 2421.

Belongs to the spectrin family. Like erythrocyte spectrin, the spectrin-like proteins are capable of forming dimers which can further associate to tetramers. Interacts (via C-terminal spectrin repeats) with TRPC4. Interacts with CALM and EMD. Interacts with isoform 1 of ACP1. Identified in a complex with ACTN4, CASK, IQGAP1, MAGI2, NPHS1 and SPTBN1. Interacts with SHANK3 (via ANK repeats). Interacts with CLN3; this interaction regulates the fodrin localization at the plasma membrane. In terms of processing, phosphorylation of Tyr-1176 decreases sensitivity to cleavage by calpain in vitro.

It is found in the cytoplasm. Its subcellular location is the cytoskeleton. The protein resides in the cell cortex. Functionally, fodrin, which seems to be involved in secretion, interacts with calmodulin in a calcium-dependent manner and is thus candidate for the calcium-dependent movement of the cytoskeleton at the membrane. This is Spectrin alpha chain, non-erythrocytic 1 (SPTAN1) from Homo sapiens (Human).